The chain runs to 162 residues: NADH-quinone oxidoreductase subunit I (162 aa).

4Fe-4S ferredoxin-type domains lie at 54–83 and 93–122; these read RRYENGEERCIACKLCEAVCPALAITIESE and TRYDIDLTKCIFCGFCEESCPVDSIVETQI. [4Fe-4S] cluster-binding residues include Cys63, Cys66, Cys69, Cys73, Cys102, Cys105, Cys108, and Cys112.

It belongs to the complex I 23 kDa subunit family. NDH-1 is composed of 14 different subunits. Subunits NuoA, H, J, K, L, M, N constitute the membrane sector of the complex. Requires [4Fe-4S] cluster as cofactor.

The protein resides in the cell inner membrane. The catalysed reaction is a quinone + NADH + 5 H(+)(in) = a quinol + NAD(+) + 4 H(+)(out). Functionally, NDH-1 shuttles electrons from NADH, via FMN and iron-sulfur (Fe-S) centers, to quinones in the respiratory chain. The immediate electron acceptor for the enzyme in this species is believed to be ubiquinone. Couples the redox reaction to proton translocation (for every two electrons transferred, four hydrogen ions are translocated across the cytoplasmic membrane), and thus conserves the redox energy in a proton gradient. The polypeptide is NADH-quinone oxidoreductase subunit I (Burkholderia mallei (strain NCTC 10247)).